Here is a 766-residue protein sequence, read N- to C-terminus: Pentatricopeptide repeat-containing protein At5g28460 (766 aa).

16 PPR repeats span residues 151 to 181 (TIVATKLLIRWFGRMGMVNQSVLVYERLDSN), 184 to 218 (NSQVRNVVVDVLLRNGLVDDAFKVLDEMLQKESVF), 221 to 257 (NRITADIVLHEVWKERLLTEEKIIALISRFSSHGVSP), 258 to 292 (NSVWLTRFISSLCKNARANTAWDILSDLMKNKTPL), 293 to 327 (EAPPFNALLSCLGRNMDISRMNDLVLKMDEVKIRP), 328 to 358 (DVVTLGILINTLCKSRRVDEALEVFEQMRGK), 369 to 404 (DSIHFNTLIDGLCKVGRLKEAEELLVRMKLEERCVP), 405 to 439 (NAVTYNCLIDGYCRAGKLETAKEVVSRMKEDEIKP), 440 to 474 (NVVTVNTIVGGMCRHHGLNMAVVFFMDMEKEGVKG), 475 to 509 (NVVTYMTLIHACCSVSNVEKAMYWYEKMLEAGCSP), 510 to 544 (DAKIYYALISGLCQVRRDHDAIRVVEKLKEGGFSL), 545 to 579 (DLLAYNMLIGLFCDKNNAEKVYEMLTDMEKEGKKP), 580 to 614 (DSITYNTLISFFGKHKDFESVERMMEQMREDGLDP), 615 to 650 (TVTTYGAVIDAYCSVGELDEALKLFKDMGLHSKVNP), 651 to 685 (NTVIYNILINAFSKLGNFGQALSLKEEMKMKMVRP), and 686 to 720 (NVETYNALFKCLNEKTQGETLLKLMDEMVEQSCEP).

It belongs to the PPR family. P subfamily.

This Arabidopsis thaliana (Mouse-ear cress) protein is Pentatricopeptide repeat-containing protein At5g28460.